Here is a 469-residue protein sequence, read N- to C-terminus: Probable lysophospholipase BODYGUARD 1 (469 aa).

The signal sequence occupies residues 1 to 45 (MGFSRSLNRTVGVFVFFILDIVDFLLCFTYKTLDFFFESEWKPCY). The N-palmitoyl cysteine moiety is linked to residue Cys46. The 255-residue stretch at 185–439 (VVFIHGFLSS…IHVVPDKDHI (255 aa)) folds into the AB hydrolase-1 domain. Residue His189 is part of the active site. Ser263 functions as the Nucleophile in the catalytic mechanism. Residues Asp410 and His438 each act as charge relay system in the active site.

As to expression, expressed exclusively in protodermal and epidermal cells of all organs, especially on adaxial sides.

It localises to the cell membrane. Its subcellular location is the secreted. It is found in the cell wall. Its function is as follows. Controls cuticle development and morphogenesis, by promoting cutin and suberin monomers loading. Involved in the regulation of abscissic acid (ABA) biosynthesis in response to osmotic stress. Plays an important role in osmotic stress and drought resistance. Required to ensure a reduced permeability of aerial tissue, thus preventing transpiration. Regulates lateral root hair development. Functionally, required for infection by the pathogenic necrotrophic fungus Botrytis cinerea, probably by regulating structural traits of the cuticle. The polypeptide is Probable lysophospholipase BODYGUARD 1 (Arabidopsis thaliana (Mouse-ear cress)).